The primary structure comprises 207 residues: Large ribosomal subunit protein bL25 (207 aa).

This sequence belongs to the bacterial ribosomal protein bL25 family. CTC subfamily. Part of the 50S ribosomal subunit; part of the 5S rRNA/L5/L18/L25 subcomplex. Contacts the 5S rRNA. Binds to the 5S rRNA independently of L5 and L18.

This is one of the proteins that binds to the 5S RNA in the ribosome where it forms part of the central protuberance. The protein is Large ribosomal subunit protein bL25 of Rhizorhabdus wittichii (strain DSM 6014 / CCUG 31198 / JCM 15750 / NBRC 105917 / EY 4224 / RW1) (Sphingomonas wittichii).